The following is a 167-amino-acid chain: MEFKFNKDGSRDFLSKKKIAIIVGYFYQDICDNLLLASQETLTKYGIKANNINVFYAPGAFEIPLLAKKLASQQINGKNLYNGIVALGAVINGETPHFKFICNECARGVSNVSYQYEIPTTFGVITTNNMEQTIARAGGYKGNKGEEATMAMIIMLYLMQQADTQFF.

Residues Phe26, 60-62 (AFE), and 89-91 (AVI) contribute to the 5-amino-6-(D-ribitylamino)uracil site. Residue 94 to 95 (ET) participates in (2S)-2-hydroxy-3-oxobutyl phosphate binding. The active-site Proton donor is His97. Phe122 is a 5-amino-6-(D-ribitylamino)uracil binding site. Arg136 lines the (2S)-2-hydroxy-3-oxobutyl phosphate pocket.

This sequence belongs to the DMRL synthase family. Forms an icosahedral capsid composed of 60 subunits, arranged as a dodecamer of pentamers.

The enzyme catalyses (2S)-2-hydroxy-3-oxobutyl phosphate + 5-amino-6-(D-ribitylamino)uracil = 6,7-dimethyl-8-(1-D-ribityl)lumazine + phosphate + 2 H2O + H(+). Its pathway is cofactor biosynthesis; riboflavin biosynthesis; riboflavin from 2-hydroxy-3-oxobutyl phosphate and 5-amino-6-(D-ribitylamino)uracil: step 1/2. In terms of biological role, catalyzes the formation of 6,7-dimethyl-8-ribityllumazine by condensation of 5-amino-6-(D-ribitylamino)uracil with 3,4-dihydroxy-2-butanone 4-phosphate. This is the penultimate step in the biosynthesis of riboflavin. This chain is 6,7-dimethyl-8-ribityllumazine synthase, found in Vesicomyosocius okutanii subsp. Calyptogena okutanii (strain HA).